A 408-amino-acid polypeptide reads, in one-letter code: Repulsive guidance molecule B homolog drag-1 (408 aa).

A signal peptide spans 1–22 (MSIVYLVSITFIFSVFKPITSC). At 23–387 (RVEECAAWFQ…SEIFKKCIPS (365 aa)) the chain is on the extracellular side. N-linked (GlcNAc...) asparagine glycosylation is found at Asn-60, Asn-134, Asn-183, and Asn-376. Residues 388–408 (KSIRFYPFLAIFFFALLSLLC) form a helical membrane-spanning segment.

The protein belongs to the repulsive guidance molecule (RGM) family. Interacts with unc-40 (via FN6 domain), dbl-1 and sma-6. As to expression, expressed in pharyngeal, hypodermal and intestinal cells.

The protein localises to the cell membrane. Functionally, probably in association with the cell surface receptor unc-40, positively modulates the BMP-like Sma/Mab signaling pathway through interaction with both the ligand dbl-1 and its type I receptor sma-6. Regulates body size and this may be through modulation of the Sma/Mab signaling pathway. The chain is Repulsive guidance molecule B homolog drag-1 from Caenorhabditis elegans.